A 449-amino-acid chain; its full sequence is Biotin carboxylase (449 aa).

The Biotin carboxylation domain maps to 1–445; it reads MLDKIVIANR…NIHYLEKKLG (445 aa). ATP is bound by residues Lys116, Lys159, 165 to 166, 201 to 204, His209, and His236; these read GG and EKYL. The ATP-grasp domain maps to 120-317; it reads IAAMKKAGVP…LIKEQLRIAA (198 aa). Lys238 is a binding site for hydrogencarbonate. Positions 276 and 288 each coordinate ATP. Mg(2+) contacts are provided by Glu276, Glu288, and Asn290. Mn(2+) is bound by residues Glu276, Glu288, and Asn290. Residues Arg292, Val295, and Arg338 each coordinate hydrogencarbonate. Arg292 is an active-site residue. Residue Arg338 participates in biotin binding.

Acetyl-CoA carboxylase is a heterohexamer of biotin carboxyl carrier protein, biotin carboxylase and the two subunits of carboxyl transferase in a 2:2 complex. Mg(2+) is required as a cofactor. It depends on Mn(2+) as a cofactor.

The catalysed reaction is N(6)-biotinyl-L-lysyl-[protein] + hydrogencarbonate + ATP = N(6)-carboxybiotinyl-L-lysyl-[protein] + ADP + phosphate + H(+). It participates in lipid metabolism; malonyl-CoA biosynthesis; malonyl-CoA from acetyl-CoA: step 1/1. In terms of biological role, this protein is a component of the acetyl coenzyme A carboxylase complex; first, biotin carboxylase catalyzes the carboxylation of the carrier protein and then the transcarboxylase transfers the carboxyl group to form malonyl-CoA. The chain is Biotin carboxylase (accC) from Escherichia coli (strain K12).